The following is an 810-amino-acid chain: Transmembrane GTPase Marf (810 aa).

Over 1 to 637 (MAAYLNRTIS…TTTPVEATPV (637 aa)) the chain is Cytoplasmic. Phosphothreonine is present on threonine 8. Positions 13–40 (TGQTGPADDDRHASSTDTVDKSGPGSPL) are disordered. Residues 20-32 (DDDRHASSTDTVD) are compositionally biased toward basic and acidic residues. Serine 38 carries the post-translational modification Phosphoserine. Positions 134 to 382 (QRDHMKVAFF…IRYFEFQDFE (249 aa)) constitute a Dynamin-type G domain. The segment at 144 to 151 (GRTSNGKS) is G1 motif. A GTP-binding site is contributed by 147–152 (SNGKSS). The tract at residues 170–171 (TT) is G2 motif. The interval 239–242 (DSPG) is G3 motif. 298-301 (NRWD) lines the GTP pocket. Residues 298 to 301 (NRWD) are G4 motif. Lysine 327 is a region of interest (G5 motif). Serine 345 lines the GTP pocket. The stretch at 427–476 (RNLKQDQKNLLTERIQGTETQMMQVTREMKMKIHNMVEEVEEKVSKALNE) forms a coiled coil. Threonine 553 carries the phosphothreonine modification. Position 554 is a phosphoserine (serine 554). Threonine 555 is modified (phosphothreonine). The interval 609 to 630 (GQPALVNRQSSIGHSVSTPTTT) is disordered. A helical transmembrane segment spans residues 638-648 (CLLPAPVVAGI). At 649 to 668 (TPEQLSLISRFAVSSIGSQG) the chain is on the mitochondrial intermembrane side. Residues 669–689 (TVGGLVVAGVMLKTIGWRVLV) form a helical membrane-spanning segment. At 690-810 (GVGALYGCIY…IFEHNYISPQ (121 aa)) the chain is on the cytoplasmic side. The stretch at 759–806 (TATTDMNDELKTLDSQLNILEANQKQLKLLRNKANYIQNELDIFEHNY) forms a coiled coil.

This sequence belongs to the TRAFAC class dynamin-like GTPase superfamily. Dynamin/Fzo/YdjA family. Mitofusin subfamily. Interacts with Mul1. Ubiquitinated by park and Mul1. Ubiquitinated, probably by HUWE1, when dietary stearate (C18:0) levels are low; ubiquitination inhibits mitochondrial fusion. In terms of tissue distribution, widely expressed in embryos, accumulating in the mesoderm and endoderm during gut development. In the male germ line, it is expressed in spermatogonia, spermatocytes and early spermatids.

It localises to the mitochondrion outer membrane. The catalysed reaction is GTP + H2O = GDP + phosphate + H(+). Its function is as follows. Mitochondrial outer membrane GTPase that mediates mitochondrial clustering and fusion. Mitochondrial fusion is the physical merging of mitochondria that gives rise to mitochondrial networks, and this process is counterbalanced by mitochondrial fission which fragments networks. Promotes, but is not required for park recruitment to dysfunctional mitochondria. The sequence is that of Transmembrane GTPase Marf (Marf) from Drosophila melanogaster (Fruit fly).